Consider the following 353-residue polypeptide: Uroporphyrinogen decarboxylase (353 aa).

Substrate is bound by residues Arg-29 to Arg-33, Asp-79, Tyr-156, Thr-211, and His-329.

It belongs to the uroporphyrinogen decarboxylase family. In terms of assembly, homodimer.

The protein localises to the cytoplasm. The enzyme catalyses uroporphyrinogen III + 4 H(+) = coproporphyrinogen III + 4 CO2. It participates in porphyrin-containing compound metabolism; protoporphyrin-IX biosynthesis; coproporphyrinogen-III from 5-aminolevulinate: step 4/4. Its function is as follows. Catalyzes the decarboxylation of four acetate groups of uroporphyrinogen-III to yield coproporphyrinogen-III. The protein is Uroporphyrinogen decarboxylase of Alcanivorax borkumensis (strain ATCC 700651 / DSM 11573 / NCIMB 13689 / SK2).